Consider the following 239-residue polypeptide: Ribosomal RNA small subunit methyltransferase G (239 aa).

S-adenosyl-L-methionine contacts are provided by residues G78, F83, 129–130 (AE), and R148.

Belongs to the methyltransferase superfamily. RNA methyltransferase RsmG family.

It localises to the cytoplasm. Functionally, specifically methylates the N7 position of a guanine in 16S rRNA. The polypeptide is Ribosomal RNA small subunit methyltransferase G (Clostridium beijerinckii (strain ATCC 51743 / NCIMB 8052) (Clostridium acetobutylicum)).